A 215-amino-acid polypeptide reads, in one-letter code: Cytochrome b6 (215 aa).

Residues 32 to 52 (IFYCLGGITLTCFLVQVATGF) traverse the membrane as a helical segment. Position 35 (C35) interacts with heme c. Heme b contacts are provided by H86 and H100. Helical transmembrane passes span 90–110 (ASMM…TGGF), 116–136 (LTWV…VTGY), and 186–206 (LHTF…FLMI). Heme b-binding residues include H187 and H202.

It belongs to the cytochrome b family. PetB subfamily. As to quaternary structure, the 4 large subunits of the cytochrome b6-f complex are cytochrome b6, subunit IV (17 kDa polypeptide, PetD), cytochrome f and the Rieske protein, while the 4 small subunits are PetG, PetL, PetM and PetN. The complex functions as a dimer. Heme b is required as a cofactor. The cofactor is heme c.

The protein localises to the plastid. Its subcellular location is the chloroplast thylakoid membrane. Component of the cytochrome b6-f complex, which mediates electron transfer between photosystem II (PSII) and photosystem I (PSI), cyclic electron flow around PSI, and state transitions. In Citrus sinensis (Sweet orange), this protein is Cytochrome b6.